Reading from the N-terminus, the 497-residue chain is Serine hydroxymethyltransferase (497 aa).

(6S)-5,6,7,8-tetrahydrofolate contacts are provided by residues Leu176 and 180-182 (GHL). Residue Lys289 is modified to N6-(pyridoxal phosphate)lysine.

The protein belongs to the SHMT family. In terms of assembly, homodimer. It depends on pyridoxal 5'-phosphate as a cofactor.

Its subcellular location is the cytoplasm. The catalysed reaction is (6R)-5,10-methylene-5,6,7,8-tetrahydrofolate + glycine + H2O = (6S)-5,6,7,8-tetrahydrofolate + L-serine. It participates in one-carbon metabolism; tetrahydrofolate interconversion. The protein operates within amino-acid biosynthesis; glycine biosynthesis; glycine from L-serine: step 1/1. In terms of biological role, catalyzes the reversible interconversion of serine and glycine with tetrahydrofolate (THF) serving as the one-carbon carrier. This reaction serves as the major source of one-carbon groups required for the biosynthesis of purines, thymidylate, methionine, and other important biomolecules. Also exhibits THF-independent aldolase activity toward beta-hydroxyamino acids, producing glycine and aldehydes, via a retro-aldol mechanism. The polypeptide is Serine hydroxymethyltransferase (Chlamydia abortus (strain DSM 27085 / S26/3) (Chlamydophila abortus)).